The chain runs to 496 residues: Steroid 21-hydroxylase (496 aa).

Position 109 (Ser109) interacts with heme b. 17alpha-hydroxyprogesterone is bound at residue Arg232. Arg232 contacts progesterone. The heme b site is built by His364, Arg425, and Cys427.

The protein belongs to the cytochrome P450 family. The cofactor is heme b.

The protein resides in the endoplasmic reticulum membrane. Its subcellular location is the microsome membrane. It catalyses the reaction progesterone + reduced [NADPH--hemoprotein reductase] + O2 = 21-hydroxyprogesterone + oxidized [NADPH--hemoprotein reductase] + H2O + H(+). The enzyme catalyses 17alpha-hydroxyprogesterone + reduced [NADPH--hemoprotein reductase] + O2 = 11-deoxycortisol + oxidized [NADPH--hemoprotein reductase] + H2O + H(+). A cytochrome P450 monooxygenase that plays a major role in adrenal steroidogenesis. Catalyzes the hydroxylation at C-21 of progesterone and 17alpha-hydroxyprogesterone to respectively form 11-deoxycorticosterone and 11-deoxycortisol, intermediate metabolites in the biosynthetic pathway of mineralocorticoids and glucocorticoids. Mechanistically, uses molecular oxygen inserting one oxygen atom into a substrate, and reducing the second into a water molecule, with two electrons provided by NADPH via cytochrome P450 reductase (CPR; NADPH-ferrihemoprotein reductase). The sequence is that of Steroid 21-hydroxylase (CYP21) from Bos taurus (Bovine).